Here is a 224-residue protein sequence, read N- to C-terminus: V-type ATP synthase subunit D (224 aa).

Residues 190 to 224 form a disordered region; that stretch reads REAGYTQKKIKAKIEGKNKEAREAAAATSHGSAAD. Positions 201-212 are enriched in basic and acidic residues; that stretch reads AKIEGKNKEARE. Residues 213–224 show a composition bias toward low complexity; the sequence is AAAATSHGSAAD.

This sequence belongs to the V-ATPase D subunit family.

Produces ATP from ADP in the presence of a proton gradient across the membrane. This chain is V-type ATP synthase subunit D (atpD), found in Deinococcus radiodurans (strain ATCC 13939 / DSM 20539 / JCM 16871 / CCUG 27074 / LMG 4051 / NBRC 15346 / NCIMB 9279 / VKM B-1422 / R1).